Consider the following 259-residue polypeptide: Deoxyribose-phosphate aldolase (259 aa).

Catalysis depends on aspartate 102, which acts as the Proton donor/acceptor. Lysine 167 acts as the Schiff-base intermediate with acetaldehyde in catalysis. Lysine 201 serves as the catalytic Proton donor/acceptor.

It belongs to the DeoC/FbaB aldolase family. DeoC type 2 subfamily.

It is found in the cytoplasm. It carries out the reaction 2-deoxy-D-ribose 5-phosphate = D-glyceraldehyde 3-phosphate + acetaldehyde. It participates in carbohydrate degradation; 2-deoxy-D-ribose 1-phosphate degradation; D-glyceraldehyde 3-phosphate and acetaldehyde from 2-deoxy-alpha-D-ribose 1-phosphate: step 2/2. Functionally, catalyzes a reversible aldol reaction between acetaldehyde and D-glyceraldehyde 3-phosphate to generate 2-deoxy-D-ribose 5-phosphate. The polypeptide is Deoxyribose-phosphate aldolase (Escherichia coli O8 (strain IAI1)).